The chain runs to 490 residues: ATP synthase subunit beta, chloroplastic (490 aa).

ATP is bound at residue 170 to 177; the sequence is GGAGVGKT.

The protein belongs to the ATPase alpha/beta chains family. F-type ATPases have 2 components, CF(1) - the catalytic core - and CF(0) - the membrane proton channel. CF(1) has five subunits: alpha(3), beta(3), gamma(1), delta(1), epsilon(1). CF(0) has four main subunits: a(1), b(1), b'(1) and c(9-12).

The protein localises to the plastid. It localises to the chloroplast thylakoid membrane. The catalysed reaction is ATP + H2O + 4 H(+)(in) = ADP + phosphate + 5 H(+)(out). Produces ATP from ADP in the presence of a proton gradient across the membrane. The catalytic sites are hosted primarily by the beta subunits. This is ATP synthase subunit beta, chloroplastic from Ipomoea wrightii (Wright's morning glory).